Here is a 312-residue protein sequence, read N- to C-terminus: MNTPPLICLAGPTAAGKSAATLALAERWPLEIINVDSATIYRGMDIGTAKPSAAEQAQVAQHLLDIRDPSQAYSAADFRTDTLALIEDIQARGRIPLLAGGTMLYYKALREGLDDLPQADPVLRAELEARAANEGWPALHAELARHDPITAARLSPNDSQRIQRALEVCLLSGRAMSALLTGTRRPAPSDLRFVTISLEPSDRAGLHARIAQRFDAMLQAGLEAEVRSLKQRTDLHPGLPSVRCVGYRQMWAYLDGEVSFDEAREQGIAATRQLAKRQLTWLRAQPERVIVDCLAAGTAARVVDIAARYLPG.

11–18 contributes to the ATP binding site; that stretch reads GPTAAGKS. 13 to 18 is a substrate binding site; the sequence is TAAGKS. 3 interaction with substrate tRNA regions span residues 36–39, 160–164, and 243–248; these read DSAT, QRIQR, and RCVGYR.

Belongs to the IPP transferase family. In terms of assembly, monomer. Mg(2+) serves as cofactor.

It carries out the reaction adenosine(37) in tRNA + dimethylallyl diphosphate = N(6)-dimethylallyladenosine(37) in tRNA + diphosphate. Catalyzes the transfer of a dimethylallyl group onto the adenine at position 37 in tRNAs that read codons beginning with uridine, leading to the formation of N6-(dimethylallyl)adenosine (i(6)A). The protein is tRNA dimethylallyltransferase of Bordetella avium (strain 197N).